A 323-amino-acid chain; its full sequence is Pseudouridine-5'-phosphate glycosidase (323 aa).

Residue Glu-43 is the Proton donor of the active site. 2 residues coordinate substrate: Lys-104 and Val-124. Asp-156 is a binding site for Mn(2+). 158 to 160 (SAD) is a substrate binding site. The active-site Nucleophile is the Lys-177.

Belongs to the pseudouridine-5'-phosphate glycosidase family. In terms of assembly, homotrimer. It depends on Mn(2+) as a cofactor.

It carries out the reaction D-ribose 5-phosphate + uracil = psi-UMP + H2O. Its function is as follows. Catalyzes the reversible cleavage of pseudouridine 5'-phosphate (PsiMP) to ribose 5-phosphate and uracil. Functions biologically in the cleavage direction, as part of a pseudouridine degradation pathway. In Streptomyces griseus subsp. griseus (strain JCM 4626 / CBS 651.72 / NBRC 13350 / KCC S-0626 / ISP 5235), this protein is Pseudouridine-5'-phosphate glycosidase.